We begin with the raw amino-acid sequence, 213 residues long: Thymidylate kinase (213 aa).

11-18 (GPEGAGKT) is an ATP binding site.

Belongs to the thymidylate kinase family.

The enzyme catalyses dTMP + ATP = dTDP + ADP. Phosphorylation of dTMP to form dTDP in both de novo and salvage pathways of dTTP synthesis. In Leuconostoc mesenteroides subsp. mesenteroides (strain ATCC 8293 / DSM 20343 / BCRC 11652 / CCM 1803 / JCM 6124 / NCDO 523 / NBRC 100496 / NCIMB 8023 / NCTC 12954 / NRRL B-1118 / 37Y), this protein is Thymidylate kinase.